We begin with the raw amino-acid sequence, 149 residues long: Large ribosomal subunit protein bL9 (149 aa).

Belongs to the bacterial ribosomal protein bL9 family.

In terms of biological role, binds to the 23S rRNA. This chain is Large ribosomal subunit protein bL9, found in Proteus mirabilis (strain HI4320).